The sequence spans 488 residues: Inosine-5'-monophosphate dehydrogenase (488 aa).

CBS domains follow at residues 95–153 and 157–214; these read VITN…SMKI and MTKE…PNSS. NAD(+) is bound by residues D251 and 301 to 303; that span reads GIG. K(+) contacts are provided by G303 and G305. S306 contacts IMP. C308 lines the K(+) pocket. C308 (thioimidate intermediate) is an active-site residue. Residues 341–343, 364–365, and 388–392 each bind IMP; these read DGG, GS, and YRGMG. The active-site Proton acceptor is the R404. Residue E416 participates in IMP binding. Residues E470, S471, and H472 each coordinate K(+).

The protein belongs to the IMPDH/GMPR family. In terms of assembly, homotetramer. It depends on K(+) as a cofactor.

It carries out the reaction IMP + NAD(+) + H2O = XMP + NADH + H(+). Its pathway is purine metabolism; XMP biosynthesis via de novo pathway; XMP from IMP: step 1/1. Mycophenolic acid (MPA) is a non-competitive inhibitor that prevents formation of the closed enzyme conformation by binding to the same site as the amobile flap. In contrast, mizoribine monophosphate (MZP) is a competitive inhibitor that induces the closed conformation. MPA is a potent inhibitor of mammalian IMPDHs but a poor inhibitor of the bacterial enzymes. MZP is a more potent inhibitor of bacterial IMPDH. In terms of biological role, catalyzes the conversion of inosine 5'-phosphate (IMP) to xanthosine 5'-phosphate (XMP), the first committed and rate-limiting step in the de novo synthesis of guanine nucleotides, and therefore plays an important role in the regulation of cell growth. This Bacillus subtilis (strain 168) protein is Inosine-5'-monophosphate dehydrogenase.